The primary structure comprises 376 residues: Lysocardiolipin acyltransferase 1 (376 aa).

The chain crosses the membrane as a helical span at residues Phe-9–Leu-29. Asn-35 carries an N-linked (GlcNAc...) asparagine glycan. Residues Ala-48–Ile-68 form a helical membrane-spanning segment. The HXXXXD motif signature appears at His-85–Asp-90. N6-acetyllysine is present on Lys-183. 2 consecutive transmembrane segments (helical) span residues Leu-309 to Tyr-329 and Phe-336 to Ile-356.

The protein belongs to the 1-acyl-sn-glycerol-3-phosphate acyltransferase family. In terms of tissue distribution, widely expressed with highest expression in heart, liver and 12.5 dpc aorta-gonad-mesonephros and lower levels in the 16 dpc fetal liver and adult bone marrow. In bone marrow, highest levels are found in B-cells compared with whole bone marrow, T-cells, erythrocytes, and granulocytes.

The protein localises to the endoplasmic reticulum membrane. It catalyses the reaction a 1-acyl-sn-glycero-3-phosphate + an acyl-CoA = a 1,2-diacyl-sn-glycero-3-phosphate + CoA. It carries out the reaction a 1-acyl-sn-glycero-3-phospho-(1D-myo-inositol) + an acyl-CoA = a 1,2-diacyl-sn-glycero-3-phospho-(1D-myo-inositol) + CoA. The catalysed reaction is 1-acyl-sn-glycero-3-phospho-(1'-sn-glycerol) + an acyl-CoA = a 1,2-diacyl-sn-glycero-3-phospho-(1'-sn-glycerol) + CoA. The enzyme catalyses 1-hexadecanoyl-sn-glycero-3-phosphate + (9Z)-octadecenoyl-CoA = 1-hexadecanoyl-2-(9Z-octadecenoyl)-sn-glycero-3-phosphate + CoA. It catalyses the reaction 1-(9Z-octadecenoyl)-sn-glycero-3-phosphate + (9Z)-octadecenoyl-CoA = 1,2-di-(9Z-octadecenoyl)-sn-glycero-3-phosphate + CoA. It carries out the reaction 1-(9Z,12Z)-octadecadienoyl-sn-glycero-3-phosphate + (9Z)-octadecenoyl-CoA = 1-(9Z,12Z)-octadecadienoyl-2-(9Z)-octadecenoyl-sn-glycero-3-phosphate + CoA. The catalysed reaction is 1-(9Z,12Z,15Z)-octadecatrienoyl-sn-glycero-3-phosphate + (9Z)-octadecenoyl-CoA = 1-(9Z,12Z,15Z)-octadecatrienoyl-2-(9Z)-octadecenoyl-sn-glycero-3-phosphate + CoA. The enzyme catalyses 1-(9Z-octadecenoyl)-sn-glycero-3-phosphate + hexadecanoyl-CoA = 1-(9Z)-octadecenoyl-2-hexadecanoyl-sn-glycero-3-phosphate + CoA. It catalyses the reaction 1-(9Z-octadecenoyl)-sn-glycero-3-phosphate + octadecanoyl-CoA = 1-(9Z-octadecenoyl)-2-octadecanoyl-sn-glycero-3-phosphate + CoA. It carries out the reaction 1-acyl-sn-glycero-3-phospho-(1'-sn-glycerol) + (9Z)-octadecenoyl-CoA = 1-acyl-2-(9Z-octadecenoyl)-sn-glycero-3-phospho-(1'-sn-glycerol) + CoA. The catalysed reaction is a 1-acyl-sn-glycero-3-phospho-(1D-myo-inositol) + (9Z)-octadecenoyl-CoA = a 1-acyl-2-(9Z-octadecenoyl)-sn-glycero-3-phospho-(1D-myo-inositol) + CoA. The enzyme catalyses 1-hexadecanoyl-sn-glycero-3-phospho-(1D-myo-inositol) + hexadecanoyl-CoA = 1,2-dihexadecanoyl-sn-glycero-3-phospho-(1D-myo-inositol) + CoA. It catalyses the reaction 1-hexadecanoyl-sn-glycero-3-phospho-(1D-myo-inositol) + octadecanoyl-CoA = 1-hexadecanoyl-2-octadecanoyl-sn-glycero-3-phospho-(1D-myo-inositol) + CoA. It carries out the reaction 1-hexadecanoyl-sn-glycero-3-phospho-(1D-myo-inositol) + (9Z)-octadecenoyl-CoA = 1-hexadecanoyl-2-(9Z-octadecenoyl)-sn-glycero-3-phospho-(1D-myo-inositol) + CoA. The catalysed reaction is 1-hexadecanoyl-sn-glycero-3-phospho-(1D-myo-inositol) + (9Z,12Z)-octadecadienoyl-CoA = 1-hexadecanoyl-2-(9Z,12Z-octadecadienoyl)-sn-glycero-3-phospho-(1D-myo-inositol) + CoA. The enzyme catalyses 1-hexadecanoyl-sn-glycero-3-phospho-(1D-myo-inositol) + (5Z,8Z,11Z,14Z)-eicosatetraenoyl-CoA = 1-hexadecanoyl-2-(5Z,8Z,11Z,14Z-eicosatetraenoyl)-sn-glycero-3-phospho-D-myo-inositol + CoA. It catalyses the reaction 1-hexadecanoyl-sn-glycero-3-phospho-(1'-sn-glycerol) + hexadecanoyl-CoA = 1,2-dihexadecanoyl-sn-glycero-3-phospho-(1'-sn-glycerol) + CoA. It carries out the reaction 1-hexadecanoyl-sn-glycero-3-phospho-(1'-sn-glycerol) + octadecanoyl-CoA = 1-hexadecanoyl-2-octadecanoyl-sn-glycero-3-phospho-(1'-sn-glycerol) + CoA. The catalysed reaction is 1-hexadecanoyl-sn-glycero-3-phospho-(1'-sn-glycerol) + (9Z)-octadecenoyl-CoA = 1-hexadecanoyl-2-(9Z-octadecenoyl)-sn-glycero-3-phospho-(1'-sn-glycerol) + CoA. The enzyme catalyses 1-hexadecanoyl-sn-glycero-3-phospho-(1'-sn-glycerol) + (9Z,12Z)-octadecadienoyl-CoA = 1-hexadecanoyl-2-(9Z,12Z-octadecadienoyl)-sn-glycero-3-phospho-(1'-sn-glycerol) + CoA. It catalyses the reaction 1-tetradecanoyl-sn-glycero-3-phospho-(1'-sn-glycerol) + (9Z)-octadecenoyl-CoA = 1-tetradecanoyl-2-(9Z-octadecenoyl)-sn-glycero-3-phospho-(1'-sn-glycerol) + CoA. It carries out the reaction 1-octadecanoyl-sn-glycero-3-phospho-(1'-sn-glycerol) + (9Z)-octadecenoyl-CoA = 1-octadecanoyl-2-(9Z-octadecenoyl)-sn-glycero-3-phospho-(1'-sn-glycerol) + CoA. The catalysed reaction is 1-(9Z-octadecenoyl)-sn-glycero-3-phospho-(1'-sn-glycerol) + (9Z)-octadecenoyl-CoA = 1,2-di-(9Z-octadecenoyl)-sn-glycero-3-phospho-(1'-sn-glycerol) + CoA. The enzyme catalyses 1-hexadecanoyl-sn-glycero-3-phospho-(1D-myo-inositol) + dodecanoyl-CoA = 1-hexadecanoyl-2-dodecanoyl-sn-glycero-3-phospho-(1D-myo-inositol) + CoA. It catalyses the reaction 1',3'-bis-[1-acyl-sn-glycero-3-phospho]-glycerol + (9Z)-octadecenoyl-CoA = 1'-[1-acyl-2-(9Z)-octadecenoyl-sn-glycero-3-phospho],3'-[1-acyl,2-hydroxy-sn-glycero-3-phospho]-glycerol + CoA. It carries out the reaction 1'-[1,2-diacyl-sn-glycero-3-phospho],3'-[1-acyl-sn-glycero-3-phospho]-glycerol + (9Z)-octadecenoyl-CoA = 1'-[1,2-diacyl-sn-glycero-3-phospho],3'-[1-acyl,2-(9Z)-octadecenoyl-sn-glycero-3-phospho]-glycerol + CoA. The catalysed reaction is 1'-[1,2-diacyl-sn-glycero-3-phospho],3'-[1-acyl-sn-glycero-3-phospho]-glycerol + (9Z,12Z)-octadecadienoyl-CoA = 1'-[1,2-diacyl-sn-glycero-3-phospho],3'-[1-acyl,2-(9Z,12Z)-octadecadienoyl-sn-glycero-3-phospho]-glycerol + CoA. The enzyme catalyses 1'-[1,2-diacyl-sn-glycero-3-phospho],3'-[1-acyl-sn-glycero-3-phospho]-glycerol + dodecanoyl-CoA = 1'-[1,2-diacyl-sn-glycero-3-phospho],3'-[1-acyl,2-dodecanoyl-sn-glycero-3-phospho]-glycerol + CoA. It catalyses the reaction 1',3'-bis-[1-acyl-sn-glycero-3-phospho]-glycerol + dodecanoyl-CoA = 1'-[1-acyl-2-dodecanoyl-sn-glycero-3-phospho],3'-[1-acyl,2-hydroxy-sn-glycero-3-phospho]-glycerol + CoA. It carries out the reaction a 1-acyl-sn-glycero-3-phosphate + (9Z)-octadecenoyl-CoA = a 1-acyl-2-(9Z-octadecenoyl)-sn-glycero-3-phosphate + CoA. The catalysed reaction is 1',3'-bis-[1-acyl-sn-glycero-3-phospho]-glycerol + (9Z,12Z)-octadecadienoyl-CoA = 1'-[1-acyl-2-(9Z,12Z)-octadecadienoyl-sn-glycero-3-phospho],3'-[1-acyl,2-hydroxy-sn-glycero-3-phospho]-glycerol + CoA. The enzyme catalyses 1',3'-bis-[1-acyl-sn-glycero-3-phospho]-glycerol + hexadecanoyl-CoA = 1'-[1-acyl-2-hexadecanoyl-sn-glycero-3-phospho],3'-[1-acyl,2-hydroxy-sn-glycero-3-phospho]-glycerol + CoA. It catalyses the reaction 1',3'-bis-[1-acyl-sn-glycero-3-phospho]-glycerol + octadecanoyl-CoA = 1'-[1-acyl-2-octadecanoyl-sn-glycero-3-phospho],3'-[1-acyl,2-hydroxy-sn-glycero-3-phospho]-glycerol + CoA. It carries out the reaction 1'-[1,2-diacyl-sn-glycero-3-phospho],3'-[1-acyl-sn-glycero-3-phospho]-glycerol + octanoyl-CoA = 1'-[1,2-diacyl-sn-glycero-3-phospho],3'-[1-acyl,2-octanoyl-sn-glycero-3-phospho]-glycerol + CoA. The catalysed reaction is 1',3'-bis-[1-acyl-sn-glycero-3-phospho]-glycerol + octanoyl-CoA = 1'-[1-acyl-2-octanoyl-sn-glycero-3-phospho],3'-[1-acyl,2-hydroxy-sn-glycero-3-phospho]-glycerol + CoA. The enzyme catalyses 1'-[1,2-diacyl-sn-glycero-3-phospho],3'-[1-acyl-sn-glycero-3-phospho]-glycerol + hexadecanoyl-CoA = 1'-[1,2-diacyl-sn-glycero-3-phospho],3'-[1-acyl,2-hexadecanoyl-sn-glycero-3-phospho]-glycerol + CoA. It catalyses the reaction 1'-[1,2-diacyl-sn-glycero-3-phospho],3'-[1-acyl-sn-glycero-3-phospho]-glycerol + (5Z,8Z,11Z,14Z)-eicosatetraenoyl-CoA = 1'-[1,2-diacyl-sn-glycero-3-phospho],3'-[1-acyl,2-(5Z,8Z,11Z,14Z)-eicosatetraenoyl-sn-glycero-3-phospho]-glycerol + CoA. It carries out the reaction 1',3'-bis-[1-acyl-sn-glycero-3-phospho]-glycerol + (5Z,8Z,11Z,14Z)-eicosatetraenoyl-CoA = 1'-[1-acyl-2-(5Z,8Z,11Z,14Z)-eicosatetraenoyl-sn-glycero-3-phospho],3'-[1-acyl,2-hydroxy-sn-glycero-3-phospho]-glycerol + CoA. The catalysed reaction is a 1-acyl-sn-glycero-3-phospho-(1D-myo-inositol) + octadecanoyl-CoA = a 1-acyl-2-octadecanoyl-sn-glycero-3-phospho-(1D-myo-inositol) + CoA. The enzyme catalyses a 2-acyl-sn-glycero-3-phospho-D-myo-inositol + octadecanoyl-CoA = 1-octadecanoyl-2-acyl-sn-glycero-3-phospho-1D-myo-inositol + CoA. The protein operates within phospholipid metabolism; CDP-diacylglycerol biosynthesis; CDP-diacylglycerol from sn-glycerol 3-phosphate: step 2/3. Exhibits acyl-CoA:lysocardiolipin acyltransferase (ALCAT) activity; catalyzes the reacylation of lyso-cardiolipin to cardiolipin (CL), a key step in CL remodeling. Recognizes both monolysocardiolipin and dilysocardiolipin as substrates with a preference for linoleoyl-CoA and oleoyl-CoA as acyl donors. Also exhibits 1-acyl-sn-glycerol-3-phosphate acyltransferase activity (AGPAT) activity; converts 1-acyl-sn-glycerol-3- phosphate (lysophosphatidic acid or LPA) into 1,2-diacyl-sn-glycerol-3- phosphate (phosphatidic acid or PA) by incorporating an acyl moiety at the sn-2 position of the glycerol backbone. Possesses lysophosphatidylinositol acyltransferase (LPIAT) activity. Possesses lysophosphatidylglycerol acyltransferase (LPGAT) activity. Required for establishment of the hematopoietic and endothelial lineages. In Mus musculus (Mouse), this protein is Lysocardiolipin acyltransferase 1 (Lclat1).